Here is a 378-residue protein sequence, read N- to C-terminus: Dual-specificity RNA methyltransferase RlmN (378 aa).

Catalysis depends on glutamate 95, which acts as the Proton acceptor. One can recognise a Radical SAM core domain in the interval glutamate 101 to aspartate 345. Cysteines 108 and 350 form a disulfide. Cysteine 115, cysteine 119, and cysteine 122 together coordinate [4Fe-4S] cluster. Residues glycine 176–glutamate 177, serine 208, serine 230–histidine 232, and asparagine 307 each bind S-adenosyl-L-methionine. The S-methylcysteine intermediate role is filled by cysteine 350.

This sequence belongs to the radical SAM superfamily. RlmN family. Requires [4Fe-4S] cluster as cofactor.

It is found in the cytoplasm. It carries out the reaction adenosine(2503) in 23S rRNA + 2 reduced [2Fe-2S]-[ferredoxin] + 2 S-adenosyl-L-methionine = 2-methyladenosine(2503) in 23S rRNA + 5'-deoxyadenosine + L-methionine + 2 oxidized [2Fe-2S]-[ferredoxin] + S-adenosyl-L-homocysteine. It catalyses the reaction adenosine(37) in tRNA + 2 reduced [2Fe-2S]-[ferredoxin] + 2 S-adenosyl-L-methionine = 2-methyladenosine(37) in tRNA + 5'-deoxyadenosine + L-methionine + 2 oxidized [2Fe-2S]-[ferredoxin] + S-adenosyl-L-homocysteine. In terms of biological role, specifically methylates position 2 of adenine 2503 in 23S rRNA and position 2 of adenine 37 in tRNAs. m2A2503 modification seems to play a crucial role in the proofreading step occurring at the peptidyl transferase center and thus would serve to optimize ribosomal fidelity. The sequence is that of Dual-specificity RNA methyltransferase RlmN from Burkholderia pseudomallei (strain K96243).